The following is a 537-amino-acid chain: Tyrosine-protein kinase fyna (537 aa).

G2 carries N-myristoyl glycine lipidation. Residues C3 and C6 are each lipidated (S-palmitoyl cysteine). Residue T12 is modified to Phosphothreonine; by PKC. Residues 13–34 (KLTDERETSVSQHAGYRYGSDP) are disordered. In terms of domain architecture, SH3 spans 82–143 (TGVTLFVALY…PSNYVAPVDS (62 aa)). The 98-residue stretch at 149-246 (WYFGKLGRKD…GLCCRLIVPC (98 aa)) folds into the SH2 domain. Positions 271–524 (LQLIKRLGNG…YLQAFLEDYF (254 aa)) constitute a Protein kinase domain. ATP-binding positions include 277–285 (LGNGQFGEV) and K299. D390 serves as the catalytic Proton acceptor. The residue at position 420 (Y420) is a Phosphotyrosine; by autocatalysis. Y531 carries the post-translational modification Phosphotyrosine.

It belongs to the protein kinase superfamily. Tyr protein kinase family. SRC subfamily. Requires Mn(2+) as cofactor. Widely expressed.

It localises to the cytoplasm. The protein resides in the nucleus. It carries out the reaction L-tyrosyl-[protein] + ATP = O-phospho-L-tyrosyl-[protein] + ADP + H(+). With respect to regulation, inhibited by phosphorylation of Tyr-531 by leukocyte common antigen and activated by dephosphorylation of this site. Relatively inactive in the unfertilized oocyte, undergoes rapid activation immediately following fertilization. Total activity increases progressively during later development and remains elevated during sphere and epiboly stage. Tyrosine-protein kinase implicated in the control of cell growth. Plays a role in the regulation of intracellular calcium levels. Required in brain development and mature brain function with important roles in the regulation of axon growth, axon guidance, and neurite extension. Role in cntn1-mediated signaling. Required for convergent extension cell movements during gastrulation, acting with yes via rhoa. May be required for epiboly to occur, possibly through its effects in calcium signaling. The polypeptide is Tyrosine-protein kinase fyna (fyna) (Danio rerio (Zebrafish)).